The following is a 260-amino-acid chain: Ribonuclease HII (260 aa).

One can recognise an RNase H type-2 domain in the interval 75–260 (ELIAGVDEVG…FEPIKSIIKK (186 aa)). Residues Asp81, Glu82, and Asp173 each contribute to the a divalent metal cation site.

Belongs to the RNase HII family. It depends on Mn(2+) as a cofactor. The cofactor is Mg(2+).

The protein localises to the cytoplasm. It carries out the reaction Endonucleolytic cleavage to 5'-phosphomonoester.. Its function is as follows. Endonuclease that specifically degrades the RNA of RNA-DNA hybrids. This Streptococcus thermophilus (strain CNRZ 1066) protein is Ribonuclease HII.